The primary structure comprises 209 residues: Kynurenine formamidase (209 aa).

W19 lines the substrate pocket. Residues H49, H53, and D55 each coordinate Zn(2+). H59 serves as the catalytic Proton donor/acceptor. Positions 160 and 172 each coordinate Zn(2+).

This sequence belongs to the Cyclase 1 superfamily. KynB family. In terms of assembly, homodimer. Requires Zn(2+) as cofactor.

It carries out the reaction N-formyl-L-kynurenine + H2O = L-kynurenine + formate + H(+). It functions in the pathway amino-acid degradation; L-tryptophan degradation via kynurenine pathway; L-kynurenine from L-tryptophan: step 2/2. In terms of biological role, catalyzes the hydrolysis of N-formyl-L-kynurenine to L-kynurenine, the second step in the kynurenine pathway of tryptophan degradation. The sequence is that of Kynurenine formamidase from Ralstonia pickettii (strain 12J).